Here is a 549-residue protein sequence, read N- to C-terminus: Glucose-6-phosphate isomerase (549 aa).

The active-site Proton donor is Glu-353. Active-site residues include His-384 and Lys-513.

The protein belongs to the GPI family.

The protein localises to the cytoplasm. The catalysed reaction is alpha-D-glucose 6-phosphate = beta-D-fructose 6-phosphate. The protein operates within carbohydrate biosynthesis; gluconeogenesis. It participates in carbohydrate degradation; glycolysis; D-glyceraldehyde 3-phosphate and glycerone phosphate from D-glucose: step 2/4. In terms of biological role, catalyzes the reversible isomerization of glucose-6-phosphate to fructose-6-phosphate. This chain is Glucose-6-phosphate isomerase, found in Brucella abortus (strain S19).